Reading from the N-terminus, the 361-residue chain is Phospho-N-acetylmuramoyl-pentapeptide-transferase (361 aa).

The next 10 membrane-spanning stretches (helical) occupy residues 25-45 (TGGAMVTGALFVFLCGPWIID), 71-91 (TPTMGGLMVLSGLVVGTVLWA), 94-114 (LNPYVWIVLAVTLGFGFVGFY), 133-153 (WRLLIEAVIAAAACYALVRLG), 169-189 (VAINLGWFFVGFGAFIVVGAG), 200-220 (GLAIVPVMIAAASFGLISYLA), 240-260 (LSVLCGALLGAGLGFLWFNAP), 264-284 (IFMGDTGSLALGGMLGSIAVA), 289-309 (IVLAVIGGLFVLEAVSVIVQV), and 338-358 (QIVIRFWIIAVMLALAGLSTL).

This sequence belongs to the glycosyltransferase 4 family. MraY subfamily. The cofactor is Mg(2+).

The protein localises to the cell inner membrane. The catalysed reaction is UDP-N-acetyl-alpha-D-muramoyl-L-alanyl-gamma-D-glutamyl-meso-2,6-diaminopimeloyl-D-alanyl-D-alanine + di-trans,octa-cis-undecaprenyl phosphate = di-trans,octa-cis-undecaprenyl diphospho-N-acetyl-alpha-D-muramoyl-L-alanyl-D-glutamyl-meso-2,6-diaminopimeloyl-D-alanyl-D-alanine + UMP. Its pathway is cell wall biogenesis; peptidoglycan biosynthesis. In terms of biological role, catalyzes the initial step of the lipid cycle reactions in the biosynthesis of the cell wall peptidoglycan: transfers peptidoglycan precursor phospho-MurNAc-pentapeptide from UDP-MurNAc-pentapeptide onto the lipid carrier undecaprenyl phosphate, yielding undecaprenyl-pyrophosphoryl-MurNAc-pentapeptide, known as lipid I. The sequence is that of Phospho-N-acetylmuramoyl-pentapeptide-transferase from Rhodopseudomonas palustris (strain BisB18).